Consider the following 297-residue polypeptide: ATP synthase gamma chain (297 aa).

It belongs to the ATPase gamma chain family. As to quaternary structure, F-type ATPases have 2 components, CF(1) - the catalytic core - and CF(0) - the membrane proton channel. CF(1) has five subunits: alpha(3), beta(3), gamma(1), delta(1), epsilon(1). CF(0) has three main subunits: a, b and c.

Its subcellular location is the cell membrane. In terms of biological role, produces ATP from ADP in the presence of a proton gradient across the membrane. The gamma chain is believed to be important in regulating ATPase activity and the flow of protons through the CF(0) complex. The chain is ATP synthase gamma chain from Beutenbergia cavernae (strain ATCC BAA-8 / DSM 12333 / CCUG 43141 / JCM 11478 / NBRC 16432 / NCIMB 13614 / HKI 0122).